The chain runs to 573 residues: AP-4 complex accessory subunit Tepsin (573 aa).

The ENTH domain occupies 8 to 141 (RDRLSFLHRL…FSDAVPQPPS (134 aa)). Disordered stretches follow at residues 136–155 (VPQP…MGAQ) and 194–311 (NAVR…NDCQ). Residues 137–150 (PQPPSQPPQIPPPA) are compositionally biased toward pro residues. A compositionally biased stretch (polar residues) spans 217 to 229 (PAVTPSASHTHPN). The segment covering 260 to 293 (SSPSSQNSSCTSNLSRASDSGSRSGSDSHSGTSR) has biased composition (low complexity). A compositionally biased stretch (basic and acidic residues) spans 294-303 (EPGDLAERAE). Ser-400 is modified (phosphoserine). Residues 497–526 (CSSEQGTESEQRLENTDTPEDSSSPLPWSP) form a disordered region. Residues 526–536 (PNSLFAGMELV) form an interaction with AP4B1 region. Residues 563-573 (SEPSAFAFLNM) form an interaction with AP4E1 region.

Interacts with AP4B1 and AP4E1; the interaction is direct and mediates the association of TEPSIN with the adapter-like complex 4 (AP-4), a heterotetramer composed of AP4B1, AP4E1, AP4M1 and AP4S1.

The protein localises to the golgi apparatus. Its subcellular location is the trans-Golgi network membrane. It localises to the cytoplasmic vesicle. The protein resides in the cytoplasm. It is found in the cytosol. Associates with the adapter-like complex 4 (AP-4) and may therefore play a role in vesicular trafficking of proteins at the trans-Golgi network. The sequence is that of AP-4 complex accessory subunit Tepsin from Mus musculus (Mouse).